We begin with the raw amino-acid sequence, 454 residues long: Isthmin-1 (454 aa).

Residues 1–29 form the signal peptide; it reads MVRLAAELLLLLGLLLLTLHITVLRGSGA. Disordered regions lie at residues 29-93, 125-144, and 161-209; these read ASDR…PRSF, PDSE…WSLP, and TNSG…STDG. Polar residues predominate over residues 38-55; the sequence is GNNNLNLESDSTSETSFP. The span at 128 to 137 shows a compositional bias: basic and acidic residues; it reads EAEKDQHPEN. The 45-residue stretch at 208–252 folds into the TSP type-1 domain; it reads DGEGDWSLWSVCSVTCGNGNQKRTRSCGYACIATESRTCDRPNCP. Disulfide bonds link cysteine 219/cysteine 246, cysteine 223/cysteine 251, and cysteine 234/cysteine 238. The AMOP domain maps to 279-442; it reads LFEVDMDSCE…QKCTESPSDE (164 aa).

Belongs to the isthmin family. In terms of assembly, interacts with integrin ITGAV/ITGB5.

It localises to the secreted. Functionally, acts as an angiogenesis inhibitor. In Mus musculus (Mouse), this protein is Isthmin-1 (Ism1).